Here is a 257-residue protein sequence, read N- to C-terminus: Acetylglutamate kinase (257 aa).

Residues 43–44, Arg65, and Asn157 contribute to the substrate site; that span reads GG. ATP contacts are provided by residues 180–185 and 208–210; these read DVSGIL and IIT.

The protein belongs to the acetylglutamate kinase family. ArgB subfamily. In terms of assembly, homodimer.

Its subcellular location is the cytoplasm. It carries out the reaction N-acetyl-L-glutamate + ATP = N-acetyl-L-glutamyl 5-phosphate + ADP. The protein operates within amino-acid biosynthesis; L-arginine biosynthesis; N(2)-acetyl-L-ornithine from L-glutamate: step 2/4. In terms of biological role, catalyzes the ATP-dependent phosphorylation of N-acetyl-L-glutamate. In Escherichia coli O139:H28 (strain E24377A / ETEC), this protein is Acetylglutamate kinase.